The chain runs to 31 residues: MSDIN-like toxin proprotein 8 (31 aa).

Positions 1–10 (MSDINTARLP) are excised as a propeptide. A cross-link (cyclopeptide (Cys-Pro)) is located at residues 11–18 (CIGFLGIP). The propeptide occupies 19-31 (SVGDDIEMVLRHG).

The protein belongs to the MSDIN fungal toxin family. In terms of processing, processed by the macrocyclase-peptidase enzyme POPB to yield a toxic cyclic octapeptide. POPB first removes 10 residues from the N-terminus. Conformational trapping of the remaining peptide forces the enzyme to release this intermediate rather than proceed to macrocyclization. The enzyme rebinds the remaining peptide in a different conformation and catalyzes macrocyclization of the N-terminal 8 residues.

Probable toxin that belongs to the MSDIN-like toxin family responsible for a large number of food poisoning cases and deaths. This chain is MSDIN-like toxin proprotein 8, found in Amanita bisporigera (Destroying angel).